The primary structure comprises 299 residues: Protease HtpX homolog (299 aa).

Transmembrane regions (helical) follow at residues 15–35 (ILLL…GYLF) and 39–59 (GLGG…SMIF). H143 serves as a coordination point for Zn(2+). E144 is a catalytic residue. A Zn(2+)-binding site is contributed by H147. A run of 2 helical transmembrane segments spans residues 158–178 (IAVA…RMMW) and 198–218 (IIML…ATLV). E227 is a Zn(2+) binding site.

It belongs to the peptidase M48B family. Requires Zn(2+) as cofactor.

It localises to the cell membrane. The protein is Protease HtpX homolog of Streptococcus pneumoniae serotype 19F (strain G54).